The primary structure comprises 296 residues: 4-hydroxy-tetrahydrodipicolinate synthase (296 aa).

Residue Thr49 participates in pyruvate binding. Tyr137 functions as the Proton donor/acceptor in the catalytic mechanism. Residue Lys166 is the Schiff-base intermediate with substrate of the active site. Ile208 provides a ligand contact to pyruvate.

This sequence belongs to the DapA family. As to quaternary structure, homotetramer; dimer of dimers.

It localises to the cytoplasm. It carries out the reaction L-aspartate 4-semialdehyde + pyruvate = (2S,4S)-4-hydroxy-2,3,4,5-tetrahydrodipicolinate + H2O + H(+). The protein operates within amino-acid biosynthesis; L-lysine biosynthesis via DAP pathway; (S)-tetrahydrodipicolinate from L-aspartate: step 3/4. Functionally, catalyzes the condensation of (S)-aspartate-beta-semialdehyde [(S)-ASA] and pyruvate to 4-hydroxy-tetrahydrodipicolinate (HTPA). The sequence is that of 4-hydroxy-tetrahydrodipicolinate synthase from Chlorobium phaeobacteroides (strain DSM 266 / SMG 266 / 2430).